The sequence spans 555 residues: Potassium-transporting ATPase potassium-binding subunit (555 aa).

10 consecutive transmembrane segments (helical) span residues 2 to 22 (IWVAVVITMLLFILVAKPTGI), 60 to 80 (QYALSLVLLNGFMIVVVYFIF), 130 to 150 (IGITFLMFAAPATTLALVMAF), 173 to 193 (VFLPIAFMAALVFVALGVPQT), 246 to 266 (MSNILQMMLMMLLPTALPFTY), 278 to 298 (ILFVSLFMVFLLGFITITTSE), 374 to 394 (AGFVNIIMYAIIAVFISGLMV), 412 to 432 (LIAVTILFHPLLILGFSALAL), 483 to 503 (LVMFLGRYFSLITMLAVAASL), and 525 to 545 (GIFIGTIVIVGALTFFPMLVL).

The protein belongs to the KdpA family. As to quaternary structure, the system is composed of three essential subunits: KdpA, KdpB and KdpC.

It localises to the cell membrane. Its function is as follows. Part of the high-affinity ATP-driven potassium transport (or Kdp) system, which catalyzes the hydrolysis of ATP coupled with the electrogenic transport of potassium into the cytoplasm. This subunit binds the extracellular potassium ions and delivers the ions to the membrane domain of KdpB through an intramembrane tunnel. This is Potassium-transporting ATPase potassium-binding subunit from Bacillus thuringiensis (strain Al Hakam).